Here is a 97-residue protein sequence, read N- to C-terminus: Citrate lyase acyl carrier protein (97 aa).

The residue at position 14 (serine 14) is an O-(phosphoribosyl dephospho-coenzyme A)serine.

This sequence belongs to the CitD family. As to quaternary structure, oligomer with a subunit composition of (alpha,beta,gamma)6.

It localises to the cytoplasm. Covalent carrier of the coenzyme of citrate lyase. The sequence is that of Citrate lyase acyl carrier protein from Leuconostoc citreum (strain KM20).